Consider the following 348-residue polypeptide: Interferon regulatory factor 2 (348 aa).

Residues 5–113 constitute a DNA-binding region (IRF tryptophan pentad repeat); sequence RMRMRPWLEE…NAFRVYRMLP (109 aa). 2 positions are modified to N6-acetyllysine: K75 and K78. The tract at residues 117–137 is disordered; that stretch reads RPSKKGKKTKSEKDDKFKQIK. Residues 125–137 are compositionally biased toward basic and acidic residues; it reads TKSEKDDKFKQIK. Residues K137, K164, and K291 each participate in a glycyl lysine isopeptide (Lys-Gly) (interchain with G-Cter in SUMO) cross-link. The segment at 311 to 348 is disordered; that stretch reads LPQVVSTASTSSSRPDRETRASVIKKTSDITQSRVKSC. Polar residues-rich tracts occupy residues 314–323 and 339–348; these read VVSTASTSSS and DITQSRVKSC.

Belongs to the IRF family. In terms of assembly, interacts with CREBBP in growing cells; the interaction acetylates IRF2 and regulates IRF2-dependent H4 promoter activity.

The protein resides in the nucleus. Functionally, specifically binds to the upstream regulatory region of type I IFN and IFN-inducible MHC class I genes (the interferon consensus sequence (ICS)) and represses those genes. Also acts as an activator for several genes including H4 and IL7. Constitutively binds to the ISRE promoter to activate IL7. Involved in cell cycle regulation through binding the site II (HiNF-M) promoter region of H4 and activating transcription during cell growth. Antagonizes IRF1 transcriptional activation. The sequence is that of Interferon regulatory factor 2 (IRF2) from Gallus gallus (Chicken).